We begin with the raw amino-acid sequence, 694 residues long: MANKREFSLEKTRNIGIMAHIDAGKTTTTERILYYTGKIHKIGETHEGDSQMDWMEEEKERGITITSAATTAQWKDHRINIIDTPGHVDFTIEVERSLRVLDGAVTVLDAQSGVEPQTENVWRQAENYGVPRIVFVNKMDKIGANFDFSVKSLHERLNANAIAVQMPIGAEDQFEGVIDLFDMVADVYDEDKLGAKWETIPVPDEYKEEAESRREEMIEEIAEVDDDIMEKFLGGEEISNEELKAALRRATLDLKAFPVFAGSAFKNKGVQMMLDGVVDYLPSPLDVKPYIAHDKEGNEVELLADDNKPFAALAFKIATDPFVGRLTFIRVYTGSLESGSYVLNASKNQRERVGRLLQMHANSRTEIPEVFSGDIAGAIGLKDTTTGDSLTDPAHPLILESLDIPAPVIQVSVEPKSKADRDKMDVALQKLTEEDPTFRAETNPETGETLISGMGELHLDIMVERMKREFNVEATIGEPQVAYRETFTVPTQAQGKFVRQSGGKGQYGDVWIEFTPNEGKGYEFEDAIVGGVVPREYIPSVDAGLQEAMKNGVLAGYPLIDVKAKLYDGSYHEVDSSEAAFKVAASLALKNAASKAGAVILEPIMKVQVIAPEEYLGDVMGSITARRGQMEGMEDRAGAKVINAMVPLSEMFGYATTLRSSTQGRGTFTMVMDHYSPCPKSIQAEIIKKRGGNA.

One can recognise a tr-type G domain in the interval 10–285 (EKTRNIGIMA…GVVDYLPSPL (276 aa)). GTP contacts are provided by residues 19–26 (AHIDAGKT), 83–87 (DTPGH), and 137–140 (NKMD).

Belongs to the TRAFAC class translation factor GTPase superfamily. Classic translation factor GTPase family. EF-G/EF-2 subfamily.

The protein localises to the cytoplasm. Functionally, catalyzes the GTP-dependent ribosomal translocation step during translation elongation. During this step, the ribosome changes from the pre-translocational (PRE) to the post-translocational (POST) state as the newly formed A-site-bound peptidyl-tRNA and P-site-bound deacylated tRNA move to the P and E sites, respectively. Catalyzes the coordinated movement of the two tRNA molecules, the mRNA and conformational changes in the ribosome. In Lactobacillus delbrueckii subsp. bulgaricus (strain ATCC BAA-365 / Lb-18), this protein is Elongation factor G.